A 112-amino-acid polypeptide reads, in one-letter code: Cortistatin (112 aa).

The first 27 residues, 1–27 (MGGCSTRGKRPSALSLLLLLLLSGIAA), serve as a signal peptide directing secretion. Residues 28–81 (SALPLESGPTGQDSVQDATGGRRTGLLTFLAWWHEWASQDSSSTAFEGGTPELS) constitute a propeptide that is removed on maturation. The interval 66 to 101 (QDSSSTAFEGGTPELSKRQERPPLQQPPHRDKKPCK) is disordered. Cys100 and Cys111 are oxidised to a cystine.

It belongs to the somatostatin family. As to expression, interneurons in the cerebral cortex and hippocampus.

It is found in the secreted. In terms of biological role, neuropeptide with neuronal depressant and sleep-modulating properties. The chain is Cortistatin (Cort) from Rattus norvegicus (Rat).